Consider the following 226-residue polypeptide: Ribonuclease HII (226 aa).

In terms of domain architecture, RNase H type-2 spans 29-220 (GPVAGVDEAG…VVAAGVRLEQ (192 aa)). A divalent metal cation contacts are provided by Asp35, Glu36, and Asp129.

The protein belongs to the RNase HII family. Mn(2+) is required as a cofactor. The cofactor is Mg(2+).

It is found in the cytoplasm. The enzyme catalyses Endonucleolytic cleavage to 5'-phosphomonoester.. In terms of biological role, endonuclease that specifically degrades the RNA of RNA-DNA hybrids. The protein is Ribonuclease HII of Rhodococcus erythropolis (strain PR4 / NBRC 100887).